Reading from the N-terminus, the 727-residue chain is Glycerol-3-phosphate dehydrogenase, mitochondrial (727 aa).

The N-terminal 42 residues, 1–42 (MAFQKAVKGTILVGGGALATVLGLSHFAHYKRKQVNLAFVEA), are a transit peptide targeting the mitochondrion. An FAD-binding site is contributed by 71–99 (DVLVIGGGATGSGCALDAVTRGLKTALVE). Tyr-601 carries the phosphotyrosine modification. EF-hand domains lie at 623–658 (SDID…IGVQ) and 659–694 (MDEN…IQKG). Positions 672, 674, 676, 678, and 683 each coordinate Ca(2+).

The protein belongs to the FAD-dependent glycerol-3-phosphate dehydrogenase family. The cofactor is FAD.

It is found in the mitochondrion. The catalysed reaction is a quinone + sn-glycerol 3-phosphate = dihydroxyacetone phosphate + a quinol. Its pathway is polyol metabolism; glycerol degradation via glycerol kinase pathway; glycerone phosphate from sn-glycerol 3-phosphate (aerobic route): step 1/1. Calcium-binding enhance the activity of the enzyme. Functionally, calcium-responsive mitochondrial glycerol-3-phosphate dehydrogenase which seems to be a key component of the pancreatic beta-cell glucose-sensing device. The polypeptide is Glycerol-3-phosphate dehydrogenase, mitochondrial (GPD2) (Bos taurus (Bovine)).